Reading from the N-terminus, the 481-residue chain is Aspartyl/glutamyl-tRNA(Asn/Gln) amidotransferase subunit B (481 aa).

The protein belongs to the GatB/GatE family. GatB subfamily. Heterotrimer of A, B and C subunits.

The catalysed reaction is L-glutamyl-tRNA(Gln) + L-glutamine + ATP + H2O = L-glutaminyl-tRNA(Gln) + L-glutamate + ADP + phosphate + H(+). The enzyme catalyses L-aspartyl-tRNA(Asn) + L-glutamine + ATP + H2O = L-asparaginyl-tRNA(Asn) + L-glutamate + ADP + phosphate + 2 H(+). Functionally, allows the formation of correctly charged Asn-tRNA(Asn) or Gln-tRNA(Gln) through the transamidation of misacylated Asp-tRNA(Asn) or Glu-tRNA(Gln) in organisms which lack either or both of asparaginyl-tRNA or glutaminyl-tRNA synthetases. The reaction takes place in the presence of glutamine and ATP through an activated phospho-Asp-tRNA(Asn) or phospho-Glu-tRNA(Gln). The polypeptide is Aspartyl/glutamyl-tRNA(Asn/Gln) amidotransferase subunit B (Cellvibrio japonicus (strain Ueda107) (Pseudomonas fluorescens subsp. cellulosa)).